The primary structure comprises 692 residues: Methionine--tRNA ligase (692 aa).

Positions 26-36 (PYANGSIHLGH) match the 'HIGH' region motif. Zn(2+) is bound by residues Cys157, Cys160, Cys170, and Cys173. The short motif at 342 to 346 (KMSKS) is the 'KMSKS' region element. Position 345 (Lys345) interacts with ATP. The tRNA-binding domain occupies 590 to 692 (DFAKVDLRIA…SGAQPGMRVK (103 aa)).

The protein belongs to the class-I aminoacyl-tRNA synthetase family. MetG type 1 subfamily. Homodimer. The cofactor is Zn(2+).

The protein resides in the cytoplasm. It catalyses the reaction tRNA(Met) + L-methionine + ATP = L-methionyl-tRNA(Met) + AMP + diphosphate. Functionally, is required not only for elongation of protein synthesis but also for the initiation of all mRNA translation through initiator tRNA(fMet) aminoacylation. This is Methionine--tRNA ligase from Methylobacillus flagellatus (strain ATCC 51484 / DSM 6875 / VKM B-1610 / KT).